The sequence spans 518 residues: Zinc finger protein 449 (518 aa).

The SCAN box domain occupies 30–112; it reads RQRFRQFQYR…SLIEDLQREL (83 aa). Residues 292–304 show a composition bias toward polar residues; sequence NPTLGETPENSNL. The tract at residues 292 to 325 is disordered; that stretch reads NPTLGETPENSNLEEPLNPKPHKKKSPGEKPHRC. 7 consecutive C2H2-type zinc fingers follow at residues 323–345, 351–373, 379–401, 407–429, 435–457, 463–485, and 491–513; these read HRCPQCGKCFARKSQLTGHQRIH, HKCPECGKRFLRSSDLYRHQRLH, YECTVCKKRFTRRSHLIGHQRTH, YKCLECGKSFCHGSSLKRHLKTH, HRCHNCGKSFSRLTALTLHQRTH, FKCNYCGKSFRQRPSLVIHLRIH, and YKCTHCSKSFRQRAGLIMHQVTH.

The protein belongs to the krueppel C2H2-type zinc-finger protein family.

The protein resides in the nucleus. Functionally, may be involved in transcriptional regulation. The polypeptide is Zinc finger protein 449 (ZNF449) (Pan troglodytes (Chimpanzee)).